A 286-amino-acid chain; its full sequence is Ribose-phosphate pyrophosphokinase (286 aa).

Residues 34-36 and 91-92 each bind ATP; these read DGE and RQ. Mg(2+)-binding residues include His124 and Asp161. Residue Lys184 is part of the active site. D-ribose 5-phosphate-binding positions include Arg186, Asp210, and 214 to 218; that span reads STGGT.

The protein belongs to the ribose-phosphate pyrophosphokinase family. Class III (archaeal) subfamily. Mg(2+) serves as cofactor.

The protein resides in the cytoplasm. It carries out the reaction D-ribose 5-phosphate + ATP = 5-phospho-alpha-D-ribose 1-diphosphate + AMP + H(+). The protein operates within metabolic intermediate biosynthesis; 5-phospho-alpha-D-ribose 1-diphosphate biosynthesis; 5-phospho-alpha-D-ribose 1-diphosphate from D-ribose 5-phosphate (route I): step 1/1. Functionally, involved in the biosynthesis of the central metabolite phospho-alpha-D-ribosyl-1-pyrophosphate (PRPP) via the transfer of pyrophosphoryl group from ATP to 1-hydroxyl of ribose-5-phosphate (Rib-5-P). The protein is Ribose-phosphate pyrophosphokinase of Thermoplasma acidophilum (strain ATCC 25905 / DSM 1728 / JCM 9062 / NBRC 15155 / AMRC-C165).